Reading from the N-terminus, the 146-residue chain is Large ribosomal subunit protein uL15 (146 aa).

The disordered stretch occupies residues 1 to 58 (MKLNELSPPKGARTARKRKGRGPGSGLGKTAGKGHKGQKARSGGGVRPGFEGGQMPVH). 2 stretches are compositionally biased toward gly residues: residues 22-31 (GPGSGLGKTA) and 42-52 (SGGGVRPGFEG).

This sequence belongs to the universal ribosomal protein uL15 family. As to quaternary structure, part of the 50S ribosomal subunit.

Its function is as follows. Binds to the 23S rRNA. This chain is Large ribosomal subunit protein uL15, found in Desulfatibacillum aliphaticivorans.